Consider the following 477-residue polypeptide: Aspartyl/glutamyl-tRNA(Asn/Gln) amidotransferase subunit B (477 aa).

It belongs to the GatB/GatE family. GatB subfamily. Heterotrimer of A, B and C subunits.

The catalysed reaction is L-glutamyl-tRNA(Gln) + L-glutamine + ATP + H2O = L-glutaminyl-tRNA(Gln) + L-glutamate + ADP + phosphate + H(+). It catalyses the reaction L-aspartyl-tRNA(Asn) + L-glutamine + ATP + H2O = L-asparaginyl-tRNA(Asn) + L-glutamate + ADP + phosphate + 2 H(+). Its function is as follows. Allows the formation of correctly charged Asn-tRNA(Asn) or Gln-tRNA(Gln) through the transamidation of misacylated Asp-tRNA(Asn) or Glu-tRNA(Gln) in organisms which lack either or both of asparaginyl-tRNA or glutaminyl-tRNA synthetases. The reaction takes place in the presence of glutamine and ATP through an activated phospho-Asp-tRNA(Asn) or phospho-Glu-tRNA(Gln). In Legionella pneumophila (strain Paris), this protein is Aspartyl/glutamyl-tRNA(Asn/Gln) amidotransferase subunit B.